A 143-amino-acid polypeptide reads, in one-letter code: Granulocyte-macrophage colony-stimulating factor (143 aa).

Residues 1–17 (MWLQNLLLLGTVVCSFS) form the signal peptide. An O-linked (GalNAc...) threonine glycan is attached at threonine 27. N-linked (GlcNAc...) asparagine glycosylation is found at asparagine 44 and asparagine 54. 2 cysteine pairs are disulfide-bonded: cysteine 70-cysteine 112 and cysteine 104-cysteine 137.

This sequence belongs to the GM-CSF family. In terms of assembly, monomer. The signaling GM-CSF receptor complex is a dodecamer of two head-to-head hexamers of two alpha, two beta, and two ligand subunits.

Its subcellular location is the secreted. In terms of biological role, cytokine that stimulates the growth and differentiation of hematopoietic precursor cells from various lineages, including granulocytes, macrophages, eosinophils and erythrocytes. This is Granulocyte-macrophage colony-stimulating factor (CSF2) from Bos taurus (Bovine).